Here is a 65-residue protein sequence, read N- to C-terminus: Small, acid-soluble spore protein C3 (65 aa).

Belongs to the alpha/beta-type SASP family.

In terms of biological role, SASP are bound to spore DNA. They are double-stranded DNA-binding proteins that cause DNA to change to an a-like conformation. They protect the DNA backbone from chemical and enzymatic cleavage and are thus involved in dormant spore's high resistance to UV light. This Priestia megaterium (Bacillus megaterium) protein is Small, acid-soluble spore protein C3 (SASP-C3).